We begin with the raw amino-acid sequence, 938 residues long: MVRKMSEQKDYKNTLNLPETGFPMRGDLAKREPGMLKNWYDNDLYQKIRQSSKGKKSFILHDGPPYANGSIHIGHAVNKILKDIIIKSKTALGFDSPYIPGWDCHGLPIELKVEGLVGKPNQKISAAQFREECRKYAREQVEGQKKDFIRLGVLGDWDNPYLTMNFDTEANIIRAFGKAVANGHLYKGSKPVHWCLDCASSLAEAEVEYEDRTSPSIYVRFAAADESAVENKFVLTEQGKGKLSAVIWTTTPWTLPSNKAISINPELEYQIVQFGDERFILAAELVESVAQAVGVESWKALGSAKGSDLELLQFKHPFYDYNVPFILGDHVTLDGGTGLVHTAPDHGQDDYVVARKYNIGMAGLIGNDGKFNSNAKFFAGLGVFEANGKVLEKLDEVGALLKLEKIRHSYPHCWRHKTPIIFRATPQWFIGMETQGLRQQALSEIKKVRWIPDWGQARIEKMVENRPDWCISRQRTWGVPVALFIHKETEQLHPRTLELIEEVAKLVERKGIQAWWDLDAKDLLGDDAAHYSKVPDTLDVWFDSGSTYYSVVKNRPEFNGKEADMYLEGSDQHRGWFMSSLMLSTATDNKAPYKQVLTHGFTVDGQGRKMSKSIGNIVTPQEVMDKFGGDILRLWVASTDYTGEMTVSDEILKRAADSYRRIRNTARFLLANLNGFDPKRDLVQAHEMISLDRWAVDCAFRAQAEIKEAYDNYQFHTVVQRLMKFCSVEMGSFYLDIIKDRQYTTKADSLARRSCQTALWHIAEALVRWMAPILSFTADEIWGYLPGERGEFVFTEEFYDGLFALDVSESLDDAYWQQVITVRNEVNRVLEQARNDKVIGGGLEAEVTIFANDEYSALLNKLGNELRFVTITSKAEVKTLADADVAEGEVAGLAIKAIRSANHKCPRCWHYSDSKDANSLCSRCEENVNGNGEERRFA.

The short motif at 65–75 is the 'HIGH' region element; the sequence is PYANGSIHIGH. Residue E568 participates in L-isoleucyl-5'-AMP binding. The 'KMSKS' region motif lies at 609–613; that stretch reads KMSKS. Residue K612 coordinates ATP. The Zn(2+) site is built by C905, C908, C921, and C924.

This sequence belongs to the class-I aminoacyl-tRNA synthetase family. IleS type 1 subfamily. In terms of assembly, monomer. The cofactor is Zn(2+).

It localises to the cytoplasm. It catalyses the reaction tRNA(Ile) + L-isoleucine + ATP = L-isoleucyl-tRNA(Ile) + AMP + diphosphate. Catalyzes the attachment of isoleucine to tRNA(Ile). As IleRS can inadvertently accommodate and process structurally similar amino acids such as valine, to avoid such errors it has two additional distinct tRNA(Ile)-dependent editing activities. One activity is designated as 'pretransfer' editing and involves the hydrolysis of activated Val-AMP. The other activity is designated 'posttransfer' editing and involves deacylation of mischarged Val-tRNA(Ile). The sequence is that of Isoleucine--tRNA ligase from Mannheimia succiniciproducens (strain KCTC 0769BP / MBEL55E).